We begin with the raw amino-acid sequence, 229 residues long: Putative germin-like protein subfamily 1 member 2 (229 aa).

The signal sequence occupies residues 1–24 (MKGLVQFLVAKIILLVLASTFVHC). Cys-34 and Cys-50 are oxidised to a cystine. Asn-38 and Asn-71 each carry an N-linked (GlcNAc...) asparagine glycan. A Cupin type-1 domain is found at 64–215 (SGLNIPGNTS…AFALDVNIVR (152 aa)). Residues His-112 and His-114 each contribute to the Mn(2+) site. A glycan (N-linked (GlcNAc...) asparagine) is linked at Asn-139. Residue His-163 coordinates Mn(2+).

Belongs to the germin family. In terms of assembly, oligomer (believed to be a pentamer but probably hexamer).

The protein localises to the secreted. The protein resides in the extracellular space. Its subcellular location is the apoplast. In terms of biological role, may play a role in plant defense. Probably has no oxalate oxidase activity even if the active site is conserved. This Arabidopsis thaliana (Mouse-ear cress) protein is Putative germin-like protein subfamily 1 member 2.